A 497-amino-acid polypeptide reads, in one-letter code: Serine hydroxymethyltransferase, mitochondrial (497 aa).

The transit peptide at 1-27 directs the protein to the mitochondrion; it reads MFIRRLHTSSRRLTCGEALRACQQTGA. At Lys-272 the chain carries N6-(pyridoxal phosphate)lysine.

Belongs to the SHMT family. Homotetramer. Pyridoxal 5'-phosphate is required as a cofactor.

It is found in the mitochondrion. The enzyme catalyses (6R)-5,10-methylene-5,6,7,8-tetrahydrofolate + glycine + H2O = (6S)-5,6,7,8-tetrahydrofolate + L-serine. The protein operates within one-carbon metabolism; tetrahydrofolate interconversion. Interconversion of serine and glycine. This Eremothecium gossypii (strain ATCC 10895 / CBS 109.51 / FGSC 9923 / NRRL Y-1056) (Yeast) protein is Serine hydroxymethyltransferase, mitochondrial (SHM1).